The primary structure comprises 634 residues: Proline and serine-rich protein 3 (634 aa).

Disordered regions lie at residues 1–69, 81–142, 185–242, 368–455, and 472–534; these read MFPK…LIDN, FRQA…TSLA, DASS…ATLK, VPPT…FEGP, and FPDS…TAPK. Positions 15 to 24 are enriched in polar residues; that stretch reads RTGATRSQRP. 3 stretches are compositionally biased toward low complexity: residues 40–56, 128–140, and 185–202; these read ESWP…STTE, VTGP…SSTS, and DASS…SPSS. Residues 203–215 are compositionally biased toward polar residues; sequence VTFNPDSNKSSNP. Residues 368–377 are compositionally biased toward low complexity; that stretch reads VPPTSTSTTP. Positions 378-399 are enriched in pro residues; sequence APTPTPQVCIPGPPTSAPPPCA. A compositionally biased stretch (polar residues) spans 436–448; that stretch reads VSTSSHQKTTVPD. Over residues 503-515 the composition is skewed to basic and acidic residues; it reads PESRRGSKTESRK. Phosphoserine is present on S588.

The protein resides in the cytoplasm. Its subcellular location is the cytoskeleton. It localises to the microtubule organizing center. It is found in the centrosome. The polypeptide is Proline and serine-rich protein 3 (Proser3) (Mus musculus (Mouse)).